The chain runs to 190 residues: Biphenyl-2,3-diol 1,2-dioxygenase 3 (190 aa).

The VOC domain occupies 6-125 (RLAHFVLQTN…DGNMVELQID (120 aa)). Fe cation contacts are provided by histidine 9, histidine 73, and glutamate 121.

This sequence belongs to the extradiol ring-cleavage dioxygenase family. In terms of assembly, homohexamer. Fe(2+) is required as a cofactor.

It carries out the reaction biphenyl-2,3-diol + O2 = 2-hydroxy-6-oxo-6-phenylhexa-2,4-dienoate + H(+). It functions in the pathway xenobiotic degradation; biphenyl degradation; 2-hydroxy-2,4-pentadienoate and benzoate from biphenyl: step 3/4. This is Biphenyl-2,3-diol 1,2-dioxygenase 3 (bphC3) from Rhodococcus globerulus.